The sequence spans 472 residues: Carboxypeptidase Q (472 aa).

Residues 1–20 (MKFLIFAFFGGVHLLSLCSG) form the signal peptide. Residues 21–44 (KAIYKNGISKRTFEEIKEEIASYG) constitute a propeptide that is removed on maturation. Asparagine 61 and asparagine 179 each carry an N-linked (GlcNAc...) asparagine glycan. Zn(2+)-binding residues include histidine 290 and aspartate 302. The Nucleophile role is filled by glutamate 336. Residue glutamate 337 participates in Zn(2+) binding. Asparagine 353 and asparagine 356 each carry an N-linked (GlcNAc...) asparagine glycan. Aspartate 364 provides a ligand contact to Zn(2+). Residue asparagine 396 is glycosylated (N-linked (GlcNAc...) asparagine). Histidine 434 serves as a coordination point for Zn(2+).

The protein belongs to the peptidase M28 family. As to quaternary structure, homodimer. The monomeric form is inactive while the homodimer is active. N-glycosylated. The secreted form is modified by hybrid or complex type oligosaccharide chains.

Its subcellular location is the endoplasmic reticulum. It is found in the golgi apparatus. It localises to the lysosome. The protein resides in the secreted. Functionally, carboxypeptidase that may play an important role in the hydrolysis of circulating peptides. Catalyzes the hydrolysis of dipeptides with unsubstituted terminals into amino acids. May play a role in the liberation of thyroxine hormone from its thyroglobulin (Tg) precursor. This chain is Carboxypeptidase Q (CPQ), found in Pongo abelii (Sumatran orangutan).